A 317-amino-acid chain; its full sequence is Lipoyl synthase (317 aa).

[4Fe-4S] cluster-binding residues include Cys56, Cys61, Cys67, Cys82, Cys86, Cys89, and Ser298. The Radical SAM core domain maps to 68–287; it reads WEDREATFLI…KEEAEQIGFS (220 aa).

It belongs to the radical SAM superfamily. Lipoyl synthase family. It depends on [4Fe-4S] cluster as a cofactor.

The protein localises to the cytoplasm. The catalysed reaction is [[Fe-S] cluster scaffold protein carrying a second [4Fe-4S](2+) cluster] + N(6)-octanoyl-L-lysyl-[protein] + 2 oxidized [2Fe-2S]-[ferredoxin] + 2 S-adenosyl-L-methionine + 4 H(+) = [[Fe-S] cluster scaffold protein] + N(6)-[(R)-dihydrolipoyl]-L-lysyl-[protein] + 4 Fe(3+) + 2 hydrogen sulfide + 2 5'-deoxyadenosine + 2 L-methionine + 2 reduced [2Fe-2S]-[ferredoxin]. It functions in the pathway protein modification; protein lipoylation via endogenous pathway; protein N(6)-(lipoyl)lysine from octanoyl-[acyl-carrier-protein]: step 2/2. In terms of biological role, catalyzes the radical-mediated insertion of two sulfur atoms into the C-6 and C-8 positions of the octanoyl moiety bound to the lipoyl domains of lipoate-dependent enzymes, thereby converting the octanoylated domains into lipoylated derivatives. This Streptomyces coelicolor (strain ATCC BAA-471 / A3(2) / M145) protein is Lipoyl synthase.